The sequence spans 925 residues: Nuclear factor of activated T-cells, cytoplasmic 2 (925 aa).

Residues 1-95 (MNAPERQPQP…FGEPDRVGPQ (95 aa)) form a disordered region. Serine 23 is modified (phosphoserine). The 9aaTAD motif lies at 26–34 (DELDFSILF). Phosphoserine is present on residues serine 99, serine 107, and serine 110. Residues 111–116 (PRIEIT) are calcineurin-binding. Residues 119 to 199 (HELIQAVGPL…CVSPNNGGPD (81 aa)) are transactivation domain A (TAD-A). 8 positions are modified to phosphoserine: serine 148, serine 168, serine 171, serine 172, serine 174, serine 175, serine 177, and serine 180. The segment at 161–175 (YREPLCLSPASSGSS) is required for cytoplasmic retention of the phosphorylated form. A run of 2 repeats spans residues 184–200 (SPYTSPCVSPNNGGPDD) and 213–229 (SPRTSPIMSPRTSLAED). The segment at 184–286 (SPYTSPCVSP…PQPSSHVAPQ (103 aa)) is 3 X approximate SP repeats. Residues 195–297 (NGGPDDLCPQ…HGSPAGYPPV (103 aa)) are disordered. 5 positions are modified to phosphoserine: serine 213, serine 217, serine 221, serine 236, and serine 243. Positions 214–224 (PRTSPIMSPRT) are enriched in polar residues. The short motif at 251–253 (KRR) is the Nuclear localization signal element. Residues serine 255, serine 268, serine 274, serine 276, serine 280, serine 326, serine 330, and serine 363 each carry the phosphoserine modification. Over residues 264–281 (PPGASPQRSRSPSPQPSS) the composition is skewed to low complexity. A 3; approximate repeat occupies 272-286 (SRSPSPQPSSHVAPQ). The RHD domain maps to 392-574 (ASLPPLEWPL…NPIECSQRSA (183 aa)). A DNA-binding region spans residues 421 to 428 (RAHYETEG). The Nuclear localization signal motif lies at 664-666 (KRK). Residues serine 755, serine 757, serine 759, serine 856, and serine 859 each carry the phosphoserine modification. Residues 839-894 (PGTTRPGPPPVSQGQRLSPGSYPTVIQQQNATSQRAAKNGPPVSDQKEVLPAGVTI) are disordered. The span at 862–874 (TVIQQQNATSQRA) shows a compositional bias: polar residues. The short motif at 904-913 (YLDDVNEIIR) is the Nuclear export signal element.

Member of the multicomponent NFATC transcription complex that consists of at least two components, a pre-existing cytoplasmic component NFATC2 and an inducible nuclear component NFATC1. Other members such as NFATC4, NFATC3 or members of the activating protein-1 family, MAF, GATA4 and Cbp/p300 can also bind the complex. The phosphorylated form specifically interacts with XPO1; which mediates nuclear export. NFATC proteins bind to DNA as monomers. Interacts with NFATC2IP. Interacts with FOXP3. Interacts with TBX21 ('Thr-303' phosphorylated form). Interacts with KAT2A. Interacts with HOMER2 and HOMER3; this interaction competes with calcineurin/PPP3CA-binding and hence prevents NFATC2 dephosphorylation and activation. Interacts with protein phosphatase PPP3CA/calcineurin A. Interacts with AKAP5 (via leucine zipper domain); this is required for NFATC2/NFAT1 recruitment to CRAC channels. In resting cells, phosphorylated by NFATC-kinase on at least 18 sites in the 99-363 region. Upon cell stimulation, all these sites except Ser-243 are dephosphorylated by calcineurin. Dephosphorylation induces a conformational change that simultaneously exposes an NLS and masks an NES, which results in nuclear localization. Simultaneously, Ser-53 or Ser-56 is phosphorylated; which is required for full transcriptional activity. Post-translationally, ubiquitinated in endothelial cells by RNF213 downstream of the non-canonical Wnt signaling pathway, leading to its degradation by the proteasome. In terms of tissue distribution, expressed in thymus, spleen, heart, testis, brain, placenta, muscle and pancreas. Isoform 1 is highly expressed in the small intestine, heart, testis, prostate, thymus, placenta and thyroid. Isoform 3 is highly expressed in stomach, uterus, placenta, trachea and thyroid.

The protein resides in the cytoplasm. The protein localises to the nucleus. Plays a role in the inducible expression of cytokine genes in T-cells, especially in the induction of the IL-2, IL-3, IL-4, TNF-alpha or GM-CSF. Promotes invasive migration through the activation of GPC6 expression and WNT5A signaling pathway. Is involved in the negative regulation of chondrogenesis. Recruited by AKAP5 to ORAI1 pore-forming subunit of CRAC channels in Ca(2+) signaling microdomains where store-operated Ca(2+) influx is coupled to calmodulin and calcineurin signaling and activation of NFAT-dependent transcriptional responses. This is Nuclear factor of activated T-cells, cytoplasmic 2 (NFATC2) from Homo sapiens (Human).